The chain runs to 442 residues: CAAX prenyl protease 1 homolog (442 aa).

The Lumenal segment spans residues 1–62; the sequence is MDASCLFKAL…KARDYKIDNH (62 aa). Residues 63 to 83 form a helical membrane-spanning segment; sequence LFGFFHSWFNQLLLTAQLIGG. Residue Tyr-84 is a topological domain, cytoplasmic. The helical transmembrane segment at 85–105 threads the bilayer; it reads YPFLWYATASYPLHVAVFLSI. The Lumenal portion of the chain corresponds to 106–146; the sequence is NSIIETIIDLPWDLYSTFIIEDAHGFNKQTIGFYFVDKIKK. A helical transmembrane segment spans residues 147-167; the sequence is MLVGFALTMPIVYGIEWIIVN. The Cytoplasmic portion of the chain corresponds to 168-170; sequence GGP. A helical membrane pass occupies residues 171-191; the sequence is YFFVYIWLFVSVVVLLLMTIY. The Lumenal segment spans residues 192–311; that stretch reads PTFIAPLFDK…ELGHWALWHT (120 aa). His-301 serves as a coordination point for Zn(2+). Glu-302 is a catalytic residue. Residue His-305 participates in Zn(2+) binding. Residues 312–332 form a helical membrane-spanning segment; the sequence is LINLVITEVNLFFSFAVFGYF. Over 333–349 the chain is Cytoplasmic; sequence YKWEALYQGFGYHDTPP. Residues 350 to 370 form a helical membrane-spanning segment; sequence VIGMMLIFQFVLALYNQLASI. Topologically, residues 371–442 are lumenal; it reads GMVIHSRSAE…AVRAFQAKNK (72 aa). Residue Glu-380 coordinates Zn(2+). The active-site Proton donor is Asp-384.

This sequence belongs to the peptidase M48A family. It depends on Zn(2+) as a cofactor.

The protein resides in the endoplasmic reticulum membrane. It localises to the membrane. The enzyme catalyses Hydrolyzes the peptide bond -P2-(S-farnesyl or geranylgeranyl)C-P1'-P2'-P3'-COOH where P1' and P2' are amino acids with aliphatic side chains and P3' is any C-terminal residue.. Its function is as follows. Proteolytically removes the C-terminal three residues of farnesylated proteins. This Caenorhabditis elegans protein is CAAX prenyl protease 1 homolog.